The following is a 222-amino-acid chain: Alpha-S2-casein (222 aa).

Residues 1–15 form the signal peptide; it reads MKFFIFTCLLAVALA. A phosphoserine mark is found at Ser23, Ser24, Ser25, Ser28, Ser46, Ser71, Ser72, Ser73, Ser76, Ser144, Ser146, Ser150, and Ser158. Positions 76–140 form a repeat; it reads SAEVATEEVK…AVPITPTLNR (65 aa). A repeat spans 158–222; the sequence is STEVFTKKTK…TKVIPYVRYL (65 aa).

Belongs to the alpha-casein family. Mammary gland specific. Secreted in milk.

Its subcellular location is the secreted. Important role in the capacity of milk to transport calcium phosphate. Functionally, casocidin-I inhibits the growth of E.coli and S.carnosus. In Bos taurus (Bovine), this protein is Alpha-S2-casein (CSN1S2).